The sequence spans 35 residues: Photosystem II reaction center protein T (35 aa).

A helical membrane pass occupies residues 3-23 (ALVYTFLLVSTLGIIFFAIFF).

It belongs to the PsbT family. PSII is composed of 1 copy each of membrane proteins PsbA, PsbB, PsbC, PsbD, PsbE, PsbF, PsbH, PsbI, PsbJ, PsbK, PsbL, PsbM, PsbT, PsbY, PsbZ, Psb30/Ycf12, at least 3 peripheral proteins of the oxygen-evolving complex and a large number of cofactors. It forms dimeric complexes.

The protein resides in the plastid. It is found in the chloroplast thylakoid membrane. Functionally, found at the monomer-monomer interface of the photosystem II (PS II) dimer, plays a role in assembly and dimerization of PSII. PSII is a light-driven water plastoquinone oxidoreductase, using light energy to abstract electrons from H(2)O, generating a proton gradient subsequently used for ATP formation. This is Photosystem II reaction center protein T from Gunnera chilensis (Chilean rhubarb).